Consider the following 145-residue polypeptide: MNPAHLLVLLAVCVSLLGAANIPPQSLNLYQFKNMIQCAGTQLCVAYVKYGCYCGPGGTGTPLDQLDRCCQTHDHCYDNAKKFGNCIPYFKTYEYTCNKPDLTCTDAKGSCARNVCDCDRAAAICFAAAPYNLANFGINKETHCQ.

A signal peptide spans 1–27 (MNPAHLLVLLAVCVSLLGAANIPPQSL). 7 disulfide bridges follow: Cys-38–Cys-97, Cys-52–Cys-144, Cys-54–Cys-70, Cys-69–Cys-125, Cys-76–Cys-118, Cys-86–Cys-111, and Cys-104–Cys-116. 3 residues coordinate Ca(2+): Tyr-53, Gly-55, and Gly-57. His-73 is a catalytic residue. Asp-74 is a binding site for Ca(2+). Asp-119 is a catalytic residue.

It belongs to the phospholipase A2 family. Group I subfamily. D49 sub-subfamily. As to quaternary structure, homodimer; disulfide-linked. Requires Ca(2+) as cofactor. As to expression, expressed by the venom gland.

It localises to the secreted. It carries out the reaction a 1,2-diacyl-sn-glycero-3-phosphocholine + H2O = a 1-acyl-sn-glycero-3-phosphocholine + a fatty acid + H(+). Its function is as follows. Snake venom phospholipase A2 (PLA2) that inhibits blood coagulation and shows bactericidal activities against both Gram-negative and -positive bacteria (E.coli, MIC=0.4 uM and S.aureus, MIC=0.1 uM). PLA2 catalyzes the calcium-dependent hydrolysis of the 2-acyl groups in 3-sn-phosphoglycerides. This is Basic phospholipase A2 BFPA from Bungarus fasciatus (Banded krait).